Reading from the N-terminus, the 339-residue chain is Adenylosuccinate synthetase (339 aa).

Residues Gly-12–Ser-18 and Gly-42–Ser-44 each bind GTP. The active-site Proton acceptor is the Asp-13. Mg(2+) is bound by residues Asp-13 and Gly-42. Residues Asp-13–Lys-16, Asn-40–His-43, Thr-127, Arg-141, Gln-179, Thr-194, and Arg-256 each bind IMP. The Proton donor role is filled by His-43. Substrate is bound at residue Thr-252–Arg-258. GTP is bound by residues Arg-258, Met-284 to Asp-286, and Lys-324 to Gly-326.

The protein belongs to the adenylosuccinate synthetase family. As to quaternary structure, homodimer. It depends on Mg(2+) as a cofactor.

The protein localises to the cytoplasm. The catalysed reaction is IMP + L-aspartate + GTP = N(6)-(1,2-dicarboxyethyl)-AMP + GDP + phosphate + 2 H(+). It participates in purine metabolism; AMP biosynthesis via de novo pathway; AMP from IMP: step 1/2. Functionally, plays an important role in the de novo pathway of purine nucleotide biosynthesis. Catalyzes the first committed step in the biosynthesis of AMP from IMP. This chain is Adenylosuccinate synthetase, found in Pyrococcus sp. (strain ST700).